The primary structure comprises 240 residues: 2,3,4,5-tetrahydropyridine-2,6-dicarboxylate N-acetyltransferase (240 aa).

Belongs to the transferase hexapeptide repeat family. DapH subfamily.

It carries out the reaction (S)-2,3,4,5-tetrahydrodipicolinate + acetyl-CoA + H2O = L-2-acetamido-6-oxoheptanedioate + CoA. It functions in the pathway amino-acid biosynthesis; L-lysine biosynthesis via DAP pathway; LL-2,6-diaminopimelate from (S)-tetrahydrodipicolinate (acetylase route): step 1/3. In terms of biological role, catalyzes the transfer of an acetyl group from acetyl-CoA to tetrahydrodipicolinate. The sequence is that of 2,3,4,5-tetrahydropyridine-2,6-dicarboxylate N-acetyltransferase from Staphylococcus epidermidis (strain ATCC 12228 / FDA PCI 1200).